Here is a 130-residue protein sequence, read N- to C-terminus: L-ectoine synthase (130 aa).

The protein belongs to the ectoine synthase family.

It carries out the reaction (2S)-4-acetamido-2-aminobutanoate = L-ectoine + H2O. It participates in amine and polyamine biosynthesis; ectoine biosynthesis; L-ectoine from L-aspartate 4-semialdehyde: step 3/3. Its function is as follows. Catalyzes the circularization of gamma-N-acetyl-alpha,gamma-diaminobutyric acid (ADABA) to ectoine (1,4,5,6-tetrahydro-2-methyl-4-pyrimidine carboxylic acid), which is an excellent osmoprotectant. In Mycolicibacterium gilvum (strain PYR-GCK) (Mycobacterium gilvum (strain PYR-GCK)), this protein is L-ectoine synthase.